The following is a 92-amino-acid chain: Acylphosphatase (92 aa).

The region spanning 5–90 is the Acylphosphatase-like domain; the sequence is TYRLVICGLV…GDFVGFQLRE (86 aa). Residues Arg-20 and Asn-38 contribute to the active site.

Belongs to the acylphosphatase family.

It catalyses the reaction an acyl phosphate + H2O = a carboxylate + phosphate + H(+). In Albidiferax ferrireducens (strain ATCC BAA-621 / DSM 15236 / T118) (Rhodoferax ferrireducens), this protein is Acylphosphatase (acyP).